We begin with the raw amino-acid sequence, 120 residues long: Spermidine export protein MdtJ (120 aa).

4 helical membrane passes run 1–21, 31–51, 54–74, and 81–101; these read MFYW…TLSM, TGFI…SFAV, IALG…ITLF, and EALS…IALI.

It belongs to the drug/metabolite transporter (DMT) superfamily. Small multidrug resistance (SMR) (TC 2.A.7.1) family. MdtJ subfamily. Forms a complex with MdtI.

The protein resides in the cell inner membrane. In terms of biological role, catalyzes the excretion of spermidine. This is Spermidine export protein MdtJ from Citrobacter koseri (strain ATCC BAA-895 / CDC 4225-83 / SGSC4696).